Consider the following 519-residue polypeptide: Probable U3 small nucleolar RNA-associated protein 18 (519 aa).

WD repeat units lie at residues 26 to 66 (DKEN…MFDT), 71 to 111 (GAKD…RLMI), 216 to 254 (SHSG…NPLV), 259 to 298 (LRSS…VQKV), 306 to 345 (NFQP…FATS), 347 to 386 (KIEG…VVRR), 390 to 429 (QDGV…ADAA), 438 to 479 (NITF…VFRN), and 485 to 519 (TPLG…AHYD).

Belongs to the WD repeat UTP18 family. Component of the ribosomal small subunit (SSU) processome.

It is found in the nucleus. The protein localises to the nucleolus. In terms of biological role, involved in nucleolar processing of pre-18S ribosomal RNA. The sequence is that of Probable U3 small nucleolar RNA-associated protein 18 from Schizosaccharomyces pombe (strain 972 / ATCC 24843) (Fission yeast).